Here is a 1493-residue protein sequence, read N- to C-terminus: Mediator of RNA polymerase II transcription subunit 14 (1493 aa).

Disordered stretches follow at residues M1 to A51, M71 to G110, T408 to V427, Q674 to S693, E894 to D913, and G957 to D997. The segment covering P90–G100 has biased composition (basic and acidic residues).

It belongs to the Mediator complex subunit 14 family. Component of the Mediator complex.

It is found in the nucleus. Its function is as follows. Component of the Mediator complex, a coactivator involved in the regulated transcription of nearly all RNA polymerase II-dependent genes. Mediator functions as a bridge to convey information from gene-specific regulatory proteins to the basal RNA polymerase II transcription machinery. Mediator is recruited to promoters by direct interactions with regulatory proteins and serves as a scaffold for the assembly of a functional preinitiation complex with RNA polymerase II and the general transcription factors. The polypeptide is Mediator of RNA polymerase II transcription subunit 14 (RGR1) (Mycosarcoma maydis (Corn smut fungus)).